An 87-amino-acid chain; its full sequence is Putative regulatory protein GK1166 (87 aa).

This sequence belongs to the RemA family.

The chain is Putative regulatory protein GK1166 from Geobacillus kaustophilus (strain HTA426).